The primary structure comprises 167 residues: NAD(P)H-quinone oxidoreductase subunit J (167 aa).

This sequence belongs to the complex I 30 kDa subunit family. In terms of assembly, NDH-1 can be composed of about 15 different subunits; different subcomplexes with different compositions have been identified which probably have different functions.

The protein localises to the cellular thylakoid membrane. It carries out the reaction a plastoquinone + NADH + (n+1) H(+)(in) = a plastoquinol + NAD(+) + n H(+)(out). The enzyme catalyses a plastoquinone + NADPH + (n+1) H(+)(in) = a plastoquinol + NADP(+) + n H(+)(out). In terms of biological role, NDH-1 shuttles electrons from an unknown electron donor, via FMN and iron-sulfur (Fe-S) centers, to quinones in the respiratory and/or the photosynthetic chain. The immediate electron acceptor for the enzyme in this species is believed to be plastoquinone. Couples the redox reaction to proton translocation, and thus conserves the redox energy in a proton gradient. Cyanobacterial NDH-1 also plays a role in inorganic carbon-concentration. This chain is NAD(P)H-quinone oxidoreductase subunit J, found in Trichodesmium erythraeum (strain IMS101).